We begin with the raw amino-acid sequence, 309 residues long: 4-hydroxy-3-methylbut-2-enyl diphosphate reductase (309 aa).

Residue Cys-13 participates in [4Fe-4S] cluster binding. (2E)-4-hydroxy-3-methylbut-2-enyl diphosphate is bound by residues His-42 and His-75. Dimethylallyl diphosphate contacts are provided by His-42 and His-75. 2 residues coordinate isopentenyl diphosphate: His-42 and His-75. Position 97 (Cys-97) interacts with [4Fe-4S] cluster. His-125 lines the (2E)-4-hydroxy-3-methylbut-2-enyl diphosphate pocket. Residue His-125 coordinates dimethylallyl diphosphate. His-125 provides a ligand contact to isopentenyl diphosphate. The Proton donor role is filled by Glu-127. Thr-165 is a (2E)-4-hydroxy-3-methylbut-2-enyl diphosphate binding site. [4Fe-4S] cluster is bound at residue Cys-195. (2E)-4-hydroxy-3-methylbut-2-enyl diphosphate contacts are provided by Ser-223, Ser-224, Asn-225, and Ser-267. Dimethylallyl diphosphate contacts are provided by Ser-223, Ser-224, Asn-225, and Ser-267. Residues Ser-223, Ser-224, Asn-225, and Ser-267 each coordinate isopentenyl diphosphate.

It belongs to the IspH family. [4Fe-4S] cluster is required as a cofactor.

It carries out the reaction isopentenyl diphosphate + 2 oxidized [2Fe-2S]-[ferredoxin] + H2O = (2E)-4-hydroxy-3-methylbut-2-enyl diphosphate + 2 reduced [2Fe-2S]-[ferredoxin] + 2 H(+). The enzyme catalyses dimethylallyl diphosphate + 2 oxidized [2Fe-2S]-[ferredoxin] + H2O = (2E)-4-hydroxy-3-methylbut-2-enyl diphosphate + 2 reduced [2Fe-2S]-[ferredoxin] + 2 H(+). The protein operates within isoprenoid biosynthesis; dimethylallyl diphosphate biosynthesis; dimethylallyl diphosphate from (2E)-4-hydroxy-3-methylbutenyl diphosphate: step 1/1. Its pathway is isoprenoid biosynthesis; isopentenyl diphosphate biosynthesis via DXP pathway; isopentenyl diphosphate from 1-deoxy-D-xylulose 5-phosphate: step 6/6. Catalyzes the conversion of 1-hydroxy-2-methyl-2-(E)-butenyl 4-diphosphate (HMBPP) into a mixture of isopentenyl diphosphate (IPP) and dimethylallyl diphosphate (DMAPP). Acts in the terminal step of the DOXP/MEP pathway for isoprenoid precursor biosynthesis. The protein is 4-hydroxy-3-methylbut-2-enyl diphosphate reductase of Chlamydia caviae (strain ATCC VR-813 / DSM 19441 / 03DC25 / GPIC) (Chlamydophila caviae).